The following is a 375-amino-acid chain: GTAGKVIKCKAAIAWEIKKPLSIEQIEVAPPKAHEVRIKILATGICRSDDHVISGAFKMPLPMVLGHEAAGVVESVGEGVTCVKPGDKVIPLFVPQCGKCSSCRSTRGNLCTSNDLSAATGLMPDGTSRFTCKGKSLHHFISTSSFTEYTVVHENSVVKIDAAAPLEKVCLIGCGFSTGYGAAVETAKVEPGSTCAVFGLGGVGLSAVMGCKAAGASRIIGVDINKDKFPKAKEMGATECVNPLDYKKPINEVLFDLTGGEGVDYSFEVIGRTDTMTAALASCHMDYGTSIIVGLPPSASEITFSPGLIFTGRTWKGSVFGGWKSKDSVPRLVSDFMQKKFSLDPLITHTMPFDKINEGFELLRAGKSIRSVLLF.

The residue at position 1 (glycine 1) is an N-acetylglycine. Residues cysteine 46, histidine 67, cysteine 97, cysteine 100, cysteine 103, cysteine 111, and cysteine 174 each coordinate Zn(2+). NAD(+)-binding positions include 199–204 (GLGGVG), aspartate 223, lysine 228, 293–295 (VGL), and arginine 370.

Belongs to the zinc-containing alcohol dehydrogenase family. Class-I subfamily. As to quaternary structure, multimeric (with different ratios of monomers). The cofactor is Zn(2+).

The protein localises to the cytoplasm. It catalyses the reaction a primary alcohol + NAD(+) = an aldehyde + NADH + H(+). The catalysed reaction is a secondary alcohol + NAD(+) = a ketone + NADH + H(+). The chain is Alcohol dehydrogenase 1A from Saara hardwickii (Indian spiny-tailed lizard).